The following is a 64-amino-acid chain: Large ribosomal subunit protein uL30 (64 aa).

Part of the 50S ribosomal subunit. In terms of processing, the protein is methylated on either Ala-2 or Lys-3.

The sequence is that of Large ribosomal subunit protein uL30 from Rhodopseudomonas palustris (strain ATCC BAA-98 / CGA009).